The sequence spans 70 residues: Large ribosomal subunit protein eL24 (70 aa).

Zn(2+) is bound by residues cysteine 6, cysteine 9, cysteine 32, and cysteine 36. The segment at 6–36 (CSYCGRPIPPGYGIMYVRVDGVVLRFCSRRC) adopts a C4-type zinc-finger fold.

It belongs to the eukaryotic ribosomal protein eL24 family. In terms of assembly, part of the 50S ribosomal subunit. Forms a cluster with proteins L3 and L14. Zn(2+) is required as a cofactor.

Its function is as follows. Binds to the 23S rRNA. This chain is Large ribosomal subunit protein eL24, found in Caldivirga maquilingensis (strain ATCC 700844 / DSM 13496 / JCM 10307 / IC-167).